Consider the following 954-residue polypeptide: Valine--tRNA ligase (954 aa).

Positions proline 48–histidine 58 match the 'HIGH' region motif. The 'KMSKS' region motif lies at lysine 560 to serine 564. Lysine 563 is a binding site for ATP. The stretch at alanine 883 to alanine 953 forms a coiled coil.

This sequence belongs to the class-I aminoacyl-tRNA synthetase family. ValS type 1 subfamily. Monomer.

The protein resides in the cytoplasm. The catalysed reaction is tRNA(Val) + L-valine + ATP = L-valyl-tRNA(Val) + AMP + diphosphate. In terms of biological role, catalyzes the attachment of valine to tRNA(Val). As ValRS can inadvertently accommodate and process structurally similar amino acids such as threonine, to avoid such errors, it has a 'posttransfer' editing activity that hydrolyzes mischarged Thr-tRNA(Val) in a tRNA-dependent manner. In Haemophilus influenzae (strain PittEE), this protein is Valine--tRNA ligase.